The sequence spans 637 residues: Acyl-CoA ligase cm3C (637 aa).

Residues 282 to 290 (TSGTSGRQK), 423 to 428 (HAWGLT), Asp-507, Arg-526, and Lys-624 each bind ATP. The tract at residues 353 to 423 (DMQRMLGSVA…SLQPSWEFLH (71 aa)) is SBD1. The interval 424 to 486 (AWGLTETCIV…YKAPNMFVGY (63 aa)) is SBD2.

The protein belongs to the ATP-dependent AMP-binding enzyme family.

It participates in secondary metabolite biosynthesis. Acyl-CoA ligase; part of the gene cluster that mediates the biosynthesis of beauveriolides I and III, cyclodepsipeptides acting as inhibitors of the acyl-CoA:cholesterol acyltransferase. The HR-PKS cm3B initiates the biosynthesis of beauveriolides by iteratively catalyzing the formation of the linear polyketide chain. The ATP-dependent acetyl-CoA ligase cm3D converts the polyketide carboxylic acid to a CoA thioester which id shuttled to the first T domain in the NRPS cm3A by the acetyltransferase cm3C. Cm3A contains 13 domains and assembles the polyketide chain, L-phenylalanine, L-alanine, and D-leucine (or D-allo-isoleucine) to form beauveriolide I (or beauveriolide III). The production of both beauveriolides I and III suggests the substrate adaptability of cm3B, using different amino acids as substrates. The polypeptide is Acyl-CoA ligase cm3C (Cordyceps militaris (strain CM01) (Caterpillar fungus)).